A 530-amino-acid chain; its full sequence is Potassium voltage-gated channel subfamily A member 6 (530 aa).

Residues 1–35 (MRSEKSLTLAAPGEVRGPEGEQQDAGEFQEAEGGG) are disordered. Position 3 is a phosphoserine (Ser3). Residues 21–30 (EQQDAGEFQE) are compositionally biased toward acidic residues. Residues 172–193 (PARGIAIVSVLVILISIVIFCL) form a helical membrane-spanning segment. The segment at 203–239 (GRGGSNEGSGTRMSPASRGSHEEEDEDEDSYAFPGSI) is disordered. The residue at position 222 (Ser222) is a Phosphoserine; by CK2. Residues 264-285 (FFLVETLCIVWFTFELLVRFSA) form a helical membrane-spanning segment. A lipid anchor (S-palmitoyl cysteine) is attached at Cys286. A helical membrane pass occupies residues 297–317 (MNIIDLVAIFPYFITLGTELV). The chain crosses the membrane as a helical; Voltage-sensor span at residues 339-359 (LAILRVIRLVRVFRIFKLSRH). The S4-S5 linker stretch occupies residues 361–374 (KGLQILGKTLQASM). The helical transmembrane segment at 375-396 (RELGLLIFFLFIGVILFSSAVY) threads the bilayer. The segment at residues 411 to 422 (PDAFWWAVVTMT) is an intramembrane region (helical). Positions 423-428 (TVGYGD) match the Selectivity filter motif. An intramembrane segment occupies 423–430 (TVGYGDMY). The chain crosses the membrane as a helical span at residues 438–466 (IVGSLCAIAGVLTIALPVPVIVSNFNYFY). Ser512 carries the phosphoserine; by PKA modification. Residues 527-529 (LTE) carry the PDZ-binding motif. Phosphothreonine; by PKA is present on Thr528.

It belongs to the potassium channel family. A (Shaker) (TC 1.A.1.2) subfamily. Kv1.6/KCNA6 sub-subfamily. Homotetramer and heterotetramer of potassium channel proteins. Interacts with KCNAB1 and KCNAB2.

The protein resides in the cell membrane. The catalysed reaction is K(+)(in) = K(+)(out). Functionally, voltage-gated potassium channel that mediates transmembrane potassium transport in excitable membranes. Forms tetrameric potassium-selective channels through which potassium ions pass in accordance with their electrochemical gradient. The channel alternates between opened and closed conformations in response to the voltage difference across the membrane. Can form functional homotetrameric channels and heterotetrameric channels that contain variable proportions of KCNA1, KCNA2, KCNA4, KNCA5, KCNA6, and possibly other family members as well; channel properties depend on the type of alpha subunits that are part of the channel. Channel properties are modulated by cytoplasmic beta subunits that regulate the subcellular location of the alpha subunits and promote rapid inactivation. Homotetrameric channels display rapid activation and slow inactivation. The sequence is that of Potassium voltage-gated channel subfamily A member 6 (Kcna6) from Rattus norvegicus (Rat).